Here is a 380-residue protein sequence, read N- to C-terminus: MAPNLRKSHPLLKMINNSLIDLPTPSNISAWWNFGSLLGICLTTQILTGLLLAAHYTADTTLAFSSVAHTCRNVQHGWLIRNLHANGASFFFICIYMHVGRGLYYGSYLYKETWNTGVILLLTLMATAFVGYVLPWGQMSFWGATVITNLFSAIPYIGQTIVEWAWGGFSVDNPTLTRFFTLHFLLPFMIMGLTLIHLTFLHESGSNNPLGIVSNCDKIPFHPYFSLKDILGFMLMFLPLMTLALFSPNLLGDPENFAPANPLVTPPHIKPEWYFLFAYAILRSIPNKLGGVLALAASMLVLFLAPLLHKSKQRTMTFRPLSQLLFWTLTANLLILTWVGSQPVEHPFMIIGQLASLTYFTILLILFPLTGALENKMLNY.

The next 4 helical transmembrane spans lie at 34–54, 78–99, 114–134, and 179–199; these read FGSLLGICLTTQILTGLLLAA, WLIRNLHANGASFFFICIYMHV, WNTGVILLLTLMATAFVGYVL, and FFTLHFLLPFMIMGLTLIHLT. 2 residues coordinate heme b: His-84 and His-98. Residues His-183 and His-197 each contribute to the heme b site. Position 202 (His-202) interacts with a ubiquinone. 4 helical membrane-spanning segments follow: residues 227–247, 289–309, 321–341, and 348–368; these read LKDILGFMLMFLPLMTLALFS, LGGVLALAASMLVLFLAPLLH, LSQLLFWTLTANLLILTWVGS, and FMIIGQLASLTYFTILLILFP.

The protein belongs to the cytochrome b family. As to quaternary structure, the cytochrome bc1 complex contains 11 subunits: 3 respiratory subunits (MT-CYB, CYC1 and UQCRFS1), 2 core proteins (UQCRC1 and UQCRC2) and 6 low-molecular weight proteins (UQCRH/QCR6, UQCRB/QCR7, UQCRQ/QCR8, UQCR10/QCR9, UQCR11/QCR10 and a cleavage product of UQCRFS1). This cytochrome bc1 complex then forms a dimer. The cofactor is heme b.

It is found in the mitochondrion inner membrane. Its function is as follows. Component of the ubiquinol-cytochrome c reductase complex (complex III or cytochrome b-c1 complex) that is part of the mitochondrial respiratory chain. The b-c1 complex mediates electron transfer from ubiquinol to cytochrome c. Contributes to the generation of a proton gradient across the mitochondrial membrane that is then used for ATP synthesis. This Balearica pavonina (Black crowned-crane) protein is Cytochrome b (MT-CYB).